Reading from the N-terminus, the 1138-residue chain is MDLFHTPAGALDKLVAHNLHPAPEFTAAVRGALGSLNITLQQHRARGSQRPRVIRIAKGGAYARGTALRGGTDVELVIFLDCFQSFGDQKTCHSETLGAMRMLLESWGGHPGPGLTFEFSQSKASRILQFRLASADGEHWIDVSLVPAFDVLGQPRSGVKPTPNVYSSLLSSHCQAGEYSACFTEPRKNFVNTRPAKLKNLILLVKHWYHQVQTRAVRATLPPSYALELLTIFAWEQGCGKDSFSLAQGLRTVLALIQHSKYLCIFWTENYGFEDPAVGEFLRRQLKRPRPVILDPADPTWDVGNGTAWRWDVLAQEAESSFSQQCFKQASGVLVQPWEGPGLPRAGILDLGHPIYQGPNQALEDNKGHLAVQSKERSQKPSNSAPGFPEAATKIPAMPNPSANKTRKIRKKAAHPKTVQEAALDSISSHVRITQSTASSHMPPDRSSISTAGSRMSPDLSQIPSKDLDCFIQDHLRPSPQFQQQVKQAIDAILCCLREKSVYKVLRVSKGGSFGRGTDLRGSCDVELVIFYKTLGDFKGQKPHQAEILRDMQAQLRHWCQNPVPGLSLQFIEQKPNALQLQLASTDLSNRVDLSVLPAFDAVGPLKSGTKPQPQVYSSLLSSGCQAGEHAACFAELRRNFINTCPPKLKSLMLLVKHWYRQVVTRYKGGEAAGDAPPPAYALELLTIFAWEQGCGEQKFSLAEGLRTILRLIQQHQSLCIYWTVNYSVQDPAIRAHLLCQLRKARPLVLDPADPTWNVGQGDWKLLAQEAAALGSQVCLQSGDGTLVPPWDVTPALLHQTLAEDLDKFISEFLQPNRHFLTQVKRAVDTICSFLKENCFRNSTIKVLKVVKGGSSAKGTALQGRSDADLVVFLSCFRQFSEQGSHRAEIISEIQAHLEACQQMHSFDVKFEVSKRKNPRVLSFTLTSQTLLDQSVDFDVLPAFDALGQLRSGSRPDPRVYTDLIHSCSNAGEFSTCFTELQRDFITSRPTKLKSLIRLVKYWYQQCNKTIKGKGSLPPQHGLELLTVYAWEQGGQNPQFNMAEGFRTVLELIVQYRQLCVYWTINYSAEDKTIGDFLKMQLRKPRPVILDPADPTGNLGHNARWDLLAKEATVYASALCCVDRDGNPIKPWPVKAAV.

Position 1 is an N-acetylmethionine (M1). The OAS domain 1 stretch occupies residues 6–341 (TPAGALDKLV…GVLVQPWEGP (336 aa)). 2 interaction with dsRNA regions span residues 12 to 56 (DKLV…VIRI) and 185 to 199 (EPRK…AKLK). The interval 342–462 (GLPRAGILDL…GSRMSPDLSQ (121 aa)) is linker. Residues 370 to 379 (LAVQSKERSQ) show a composition bias toward basic and acidic residues. Disordered regions lie at residues 370–403 (LAVQ…NPSA) and 434–459 (TQST…MSPD). A compositionally biased stretch (polar residues) spans 447–459 (SSISTAGSRMSPD). OAS domain stretches follow at residues 463-793 (IPSK…PWDV) and 801-1135 (TLAE…WPVK). S855 serves as a coordination point for ATP. Mg(2+) contacts are provided by D867, D869, and D939. Residues R998, K1001, and Q1020 each contribute to the ATP site.

Belongs to the 2-5A synthase family. As to quaternary structure, monomer. The cofactor is Mg(2+). Intestine.

The protein resides in the cytoplasm. The protein localises to the nucleus. The enzyme catalyses 3 ATP = 5'-triphosphoadenylyl-(2'-&gt;5')-adenylyl-(2'-&gt;5')-adenosine + 2 diphosphate. With respect to regulation, produced as a latent enzyme which is activated by dsRNA generated during the course of viral infection. Strongly activated by long dsRNAs at least 50 nucleotides in length. ssRNA does not activate the enzyme. Its function is as follows. Interferon-induced, dsRNA-activated antiviral enzyme which plays a critical role in cellular innate antiviral response. In addition, it may also play a role in other cellular processes such as apoptosis, cell growth, differentiation and gene regulation. Synthesizes preferentially dimers of 2'-5'-oligoadenylates (2-5A) from ATP which then bind to the inactive monomeric form of ribonuclease L (RNase L) leading to its dimerization and subsequent activation. Activation of RNase L leads to degradation of cellular as well as viral RNA, resulting in the inhibition of protein synthesis, thus terminating viral replication. Can mediate the antiviral effect via the classical RNase L-dependent pathway or an alternative antiviral pathway independent of RNase L. The chain is 2'-5'-oligoadenylate synthase 3 (Oas3) from Mus musculus (Mouse).